Reading from the N-terminus, the 369-residue chain is Probable peptidoglycan glycosyltransferase FtsW (369 aa).

Transmembrane regions (helical) follow at residues 11–31, 48–68, 77–97, 134–151, 154–174, 177–197, 265–285, and 306–326; these read LLSVTIILLIFSIIMVGSSSV, NFIHSIISILCMIFVFNVPIY, LILCSIILLLTLNYFGISNHG, TSTIQLISIILIVSKLLL, PDFGTLVILYSSLLFMLFLIG, FLFLSASSAIFTTIVLSLIYF, LGYLGIAMIVISLFFIFFQGM, and ISLLIIIQSIINIGSSIGILP.

Belongs to the SEDS family. FtsW subfamily.

It is found in the cell inner membrane. The catalysed reaction is [GlcNAc-(1-&gt;4)-Mur2Ac(oyl-L-Ala-gamma-D-Glu-L-Lys-D-Ala-D-Ala)](n)-di-trans,octa-cis-undecaprenyl diphosphate + beta-D-GlcNAc-(1-&gt;4)-Mur2Ac(oyl-L-Ala-gamma-D-Glu-L-Lys-D-Ala-D-Ala)-di-trans,octa-cis-undecaprenyl diphosphate = [GlcNAc-(1-&gt;4)-Mur2Ac(oyl-L-Ala-gamma-D-Glu-L-Lys-D-Ala-D-Ala)](n+1)-di-trans,octa-cis-undecaprenyl diphosphate + di-trans,octa-cis-undecaprenyl diphosphate + H(+). Its pathway is cell wall biogenesis; peptidoglycan biosynthesis. Peptidoglycan polymerase that is essential for cell division. The sequence is that of Probable peptidoglycan glycosyltransferase FtsW from Riesia pediculicola (strain USDA).